Consider the following 203-residue polypeptide: Lectin (203 aa).

The signal sequence occupies residues 1-20 (MINILHVIAGLALASVGVDA). Residues 21–53 (RQVGVGADVLHAVENTIDSITGVEASHSALEVG) constitute a propeptide that is removed on maturation.

As to quaternary structure, monomer.

Functionally, N-acetyl-D-glucosamine-specific lectin. Specifically agglutinates rabbit erythrocytes. The polypeptide is Lectin (UPL1) (Ulva pertusa (Sea lettuce)).